We begin with the raw amino-acid sequence, 344 residues long: N-acetyl-gamma-glutamyl-phosphate reductase 1 (344 aa).

Cys-150 is an active-site residue.

Belongs to the NAGSA dehydrogenase family. Type 1 subfamily.

The protein localises to the cytoplasm. The enzyme catalyses N-acetyl-L-glutamate 5-semialdehyde + phosphate + NADP(+) = N-acetyl-L-glutamyl 5-phosphate + NADPH + H(+). Its pathway is amino-acid biosynthesis; L-arginine biosynthesis; N(2)-acetyl-L-ornithine from L-glutamate: step 3/4. Its function is as follows. Catalyzes the NADPH-dependent reduction of N-acetyl-5-glutamyl phosphate to yield N-acetyl-L-glutamate 5-semialdehyde. The chain is N-acetyl-gamma-glutamyl-phosphate reductase 1 from Pseudomonas putida (strain ATCC 47054 / DSM 6125 / CFBP 8728 / NCIMB 11950 / KT2440).